Consider the following 443-residue polypeptide: MTELRQRAVREDAPPEDKESESEAKLDGETASDSESRAETAPPPTSIDDTPEVLNRALSNLSSRWKNWWVRGILTMAMIAFFFIIIYLGPMVLMMIVMCVQIKCFHEIITIGYNVYHSYDLPWFRTLSWYFLLCVNYFFYGETVTDYFFTLVQREEPLRILSKYHRFISFTLYLTGFCMFVLSLVKKHYRLQFYMFGWTHVTLLIVVTQSHLVIHNLFEGMIWFIVPISCVICNDIMAYMFGFFFGRTPLIKLSPKKTWEGFIGGFFATVVFGLLLSYVMSGYRCFVCPVEYNNDTNSFTVDCEPSDLFRLQEYNIPGVIQSLVGWKTMRMYPFQIHSALSTFASLIGPFGGFFASGFKRAFKIKDFANTIPGHGGIMDRFDCQYLMATFVNVYIASFIRGPNPSKLIQQFLTLRPDQQLHIFNTLKSHLTDKGILMSALEEE.

A compositionally biased stretch (basic and acidic residues) spans 1–38; the sequence is MTELRQRAVREDAPPEDKESESEAKLDGETASDSESRA. The tract at residues 1–51 is disordered; the sequence is MTELRQRAVREDAPPEDKESESEAKLDGETASDSESRAETAPPPTSIDDTP. Serine 20 is subject to Phosphoserine. Position 30 is a phosphothreonine (threonine 30). Phosphoserine is present on residues serine 32, serine 34, and serine 36. At threonine 50 the chain carries Phosphothreonine. 6 helical membrane-spanning segments follow: residues 78-98, 129-149, 165-185, 212-232, 261-281, and 338-358; these read MIAFFFIIIYLGPMVLMMIVM, WYFLLCVNYFFYGETVTDYFF, HRFISFTLYLTGFCMFVLSLV, LVIHNLFEGMIWFIVPISCVI, GFIGGFFATVVFGLLLSYVMS, and SALSTFASLIGPFGGFFASGF.

It belongs to the CDS family. As to quaternary structure, homodimer.

It localises to the endoplasmic reticulum membrane. It catalyses the reaction a 1,2-diacyl-sn-glycero-3-phosphate + CTP + H(+) = a CDP-1,2-diacyl-sn-glycerol + diphosphate. It carries out the reaction 1-octadecanoyl-2-(5Z,8Z,11Z,14Z-eicosatetraenoyl)-sn-glycero-3-phosphate + CTP + H(+) = 1-octadecanoyl-2-(5Z,8Z,11Z,14Z-eicosatetraenoyl)-sn-glycero-3-cytidine-5'-diphosphate + diphosphate. The catalysed reaction is 1-octadecanoyl-2-(9Z,12Z-octadecadienoyl)-sn-glycero-3-phosphate + CTP + H(+) = 1-octadecanoyl-2-(9Z,12Z-octadecadienoyl)-sn-glycero-3-cytidine-5'-diphosphate + diphosphate. The enzyme catalyses 1-hexadecanoyl-2-(5Z,8Z,11Z,14Z-eicosatetraenoyl)-sn-glycero-3-phosphate + CTP + H(+) = 1-hexadecanoyl-2-(5Z,8Z,11Z,14Z-eicosatetraenoyl)-sn-glycero-3-cytidine-5'-diphosphate + diphosphate. It catalyses the reaction 1,2-di-(5Z,8Z,11Z,14Z)-eicosatetraenoyl-sn-glycero-3-phosphate + CTP + H(+) = 1,2-di-(5Z,8Z,11Z,14Z-eicosatetraenoyl)-sn-glycero-3-cytidine-5'-diphosphate + diphosphate. It carries out the reaction 1-octadecanoyl-2-(9Z-octadecenoyl)-sn-glycero-3-phosphate + CTP + H(+) = 1-octadecanoyl-2-(9Z-octadecenoyl)-sn-glycero-3-cytidine-5'-diphosphate + diphosphate. The catalysed reaction is 1-octadecanoyl-2-(4Z,7Z,10Z,13Z,16Z,19Z-docosahexaenoyl)-sn-glycero-3-phosphate + CTP + H(+) = 1-octadecanoyl-2-(4Z,7Z,10Z,13Z,16Z,19Z-docosahexaenoyl)-sn-glycero-3-cytidine-5'-diphosphate + diphosphate. The enzyme catalyses 1,2-di-(9Z,12Z-octadecadienoyl)-sn-glycero-3-phosphate + CTP + H(+) = 1,2-di-(9Z,12Z-octadecadienoyl)-sn-glycero-3-cytidine-5'-diphosphate + diphosphate. It catalyses the reaction 1,2-di-(9Z-octadecenoyl)-sn-glycero-3-phosphate + CTP + H(+) = 1,2-di-(9Z-octadecenoyl)-sn-glycero-3-cytidine-5'-diphosphate + diphosphate. Its pathway is phospholipid metabolism; CDP-diacylglycerol biosynthesis; CDP-diacylglycerol from sn-glycerol 3-phosphate: step 3/3. Its function is as follows. Catalyzes the conversion of phosphatidic acid (PA) to CDP-diacylglycerol (CDP-DAG), an essential intermediate in the synthesis of phosphatidylglycerol, cardiolipin and phosphatidylinositol. Exhibits specificity for the nature of the acyl chains at the sn-1 and sn-2 positions in the substrate, PA and the preferred acyl chain composition is 1-stearoyl-2-arachidonoyl-sn-phosphatidic acid. Plays an important role in regulating the growth and maturation of lipid droplets which are storage organelles at the center of lipid and energy homeostasis. The protein is Phosphatidate cytidylyltransferase 2 of Rattus norvegicus (Rat).